The following is a 50-amino-acid chain: Monellin chain B (50 aa).

As to quaternary structure, heterodimer of an A chain and a B chain.

In terms of biological role, taste-modifying protein; intensely sweet-tasting protein. The chain is Monellin chain B from Dioscoreophyllum cumminsii (Serendipity berry).